Consider the following 322-residue polypeptide: Mitochondrial thiamine pyrophosphate carrier 1 (322 aa).

Solcar repeat units lie at residues 12-111 (GSKT…VTLA), 122-208 (PAAA…LRVP), and 215-310 (PFGS…VLRL). Helical transmembrane passes span 18-38 (MIAG…LDVV), 92-108 (LMYV…YRSV), 128-148 (FIAG…LDLL), 180-200 (FFQG…IFFA), 221-241 (ATAG…FDLI), and 285-302 (GLTV…VTMW).

The protein belongs to the mitochondrial carrier (TC 2.A.29) family.

The protein localises to the mitochondrion inner membrane. Its function is as follows. Mitochondrial transporter that mediates uptake of thiamine pyrophosphate (ThPP) into mitochondria. The protein is Mitochondrial thiamine pyrophosphate carrier 1 (tpc1) of Sclerotinia sclerotiorum (strain ATCC 18683 / 1980 / Ss-1) (White mold).